Consider the following 349-residue polypeptide: N-acetyltaurine hydrolase (349 aa).

6 residues coordinate a divalent metal cation: His26, His28, Glu169, His201, His230, and Asp298.

This sequence belongs to the metallo-dependent hydrolases superfamily. Phosphotriesterase family. Requires a divalent metal cation as cofactor.

The protein localises to the cytoplasm. It localises to the cytosol. It catalyses the reaction N-acetyltaurine + H2O = taurine + acetate. The catalysed reaction is N-propanoyltaurine + H2O = propanoate + taurine. It carries out the reaction N-acetyl-L-methionine + H2O = L-methionine + acetate. The enzyme catalyses N-acetyl-L-isoleucine + H2O = L-isoleucine + acetate. It catalyses the reaction N-acetyl-L-leucine + H2O = L-leucine + acetate. The catalysed reaction is N-acetyl-L-valine + H2O = L-valine + acetate. N-acetyltaurine hydrolase that catalyzes the hydrolysis of N-acetyltaurine into taurine and acetate. PTER also acts on other N-acetyl amino acids (Met, Ile, Leu, Val) and N-propionyltaurine, but at lower rates. This chain is N-acetyltaurine hydrolase (pter), found in Tetraodon nigroviridis (Spotted green pufferfish).